A 184-amino-acid chain; its full sequence is Probable chemoreceptor glutamine deamidase CheD (184 aa).

Belongs to the CheD family.

It catalyses the reaction L-glutaminyl-[protein] + H2O = L-glutamyl-[protein] + NH4(+). Functionally, probably deamidates glutamine residues to glutamate on methyl-accepting chemotaxis receptors (MCPs), playing an important role in chemotaxis. The sequence is that of Probable chemoreceptor glutamine deamidase CheD from Rhizobium etli (strain CIAT 652).